Reading from the N-terminus, the 89-residue chain is Small ribosomal subunit protein uS15 (89 aa).

Basic and acidic residues predominate over residues 1 to 20 (MSITAERKAELIKTHARGEA). Residues 1-24 (MSITAERKAELIKTHARGEADTGS) are disordered.

Belongs to the universal ribosomal protein uS15 family. Part of the 30S ribosomal subunit. Forms a bridge to the 50S subunit in the 70S ribosome, contacting the 23S rRNA.

One of the primary rRNA binding proteins, it binds directly to 16S rRNA where it helps nucleate assembly of the platform of the 30S subunit by binding and bridging several RNA helices of the 16S rRNA. In terms of biological role, forms an intersubunit bridge (bridge B4) with the 23S rRNA of the 50S subunit in the ribosome. The chain is Small ribosomal subunit protein uS15 from Phenylobacterium zucineum (strain HLK1).